The sequence spans 287 residues: MGTRSYRPYTPSTRQVTVSDFAEITKTEPEKSLTTSKHRAKGRNNTGRITSRRRGGGHKQLYRIIDFKRDKHNIPAKVAAIEYDPNRNARIALLYYQDGEKRYILHPNGLKVGTIIISGPESPFEDGNALPLSRIPLGTSVHNVEMTPGKGGQIVRAAGASAQVVAKEGDYVTLKLPSGEVRLIRRDCYATIGQVGNTDARNLSAGKAGRNRWKGRRPKVRGSVMNPVDHPHGGGEGRAPIGRSGPVTPWGKPTLGAKTRNRKKLSSKFIVRRRRKSSKRGRGGRES.

2 disordered regions span residues 25–57 (TKTE…RGGG) and 203–287 (LSAG…GRES). Basic residues-rich tracts occupy residues 209–220 (GRNRWKGRRPKV) and 259–287 (TRNR…GRES).

It belongs to the universal ribosomal protein uL2 family. Part of the 50S ribosomal subunit. Forms a bridge to the 30S subunit in the 70S ribosome.

In terms of biological role, one of the primary rRNA binding proteins. Required for association of the 30S and 50S subunits to form the 70S ribosome, for tRNA binding and peptide bond formation. It has been suggested to have peptidyltransferase activity; this is somewhat controversial. Makes several contacts with the 16S rRNA in the 70S ribosome. The polypeptide is Large ribosomal subunit protein uL2 (Nostoc punctiforme (strain ATCC 29133 / PCC 73102)).